We begin with the raw amino-acid sequence, 1151 residues long: MVSRPAMSPVSPVWPRKPNLWAFWVLRLVLLLSLKSWAEDTLQHCTWLLVLNKFEKVGLHLSKDRFQDHEPIDTVAKVFQKLTDSPIDPSENYLSFPYYLQINFSCPGQNSEELARKGHLMGMKPMVRINYMYSVNFYRWEMENLQILMEAAPMRSTGYCPAEAMCILNWYTPMPFKNGSVVSSVDIYTNGIGPFIPKKRFYVNMNGFLKRDASGKSLFAIGYESLVLKSSHFRLSKSRPLWYTVNHAPVFILGGFYDEKAILFSDSNFQDYVLLELSIDSCWVGSFYCPILGFSATIHDAIATESTLFIRQNQLVYYFTGTYSTLFDKSHGSSRWVRVLPSECIKRLCPVYFSGNGSEYVLALTTGKNEGYIHIGTITDGLVSFEMVPDGWSVCEKLPGKNCSIDWATYITDERNLLLLVKIDSGQFYLVNFNTEFKTLNILYKIPEFIPEAKELDFLVLLDTVTYTNTPMTPKGLFFNTLNNMLYIWGNFILQSYNREEFIFLADFPKESTIKYMVNSFKGQMAVVTENEEIWYFLEGGYDVYQVVPSQGWRTYLKLQKMQKSPLYSTNESLVSLFYQDENLFQLVYLFDVGKERLVKRLLPVGTLMEYNLPKPFTVVNQGNYKMITFTNTCPFKAIHAVDVPKKQHASRTESYVALPPLVSESLGFHNNNTLAVYQGLVYYLLWLHSKYDKPYADPVHDPTWRWWQHKTKDKDYFFYLFSNRLAAEGIYINMNAYQKLYNMSGDYGIPDLFFLDKGNWFTFTVVLLSHQDTFTSSDSQGPTINVDKKLSLSLVLADPECLSVTATREFLLNRNTLLTKIKVIDKKRCSEQGMVGRNIKKTSMLIKVLGAPGNCIQRTYLGDHIQGIRLVPIFIGCPPGKRLAFDVSYTIKHSEEINKHYFDCVIKDAEMPCFLFRDLFQPFFLVQDLVTGDSGSFLGSYVLKVVGGGRTLNTIRDYTEEEIFRYNSPLDTTNSLIWKTKVERTTEDKKFYIMSHESPGVEWLCLENSPCYDIIPQSIYPPEFFFKLLVSNRGVDNSTYCDYKLTFIVHIHGLPLSSKRSSFIVMVSTSFFIALVVFYILFCLVWPHIVKAWVSFRWKIHNMMAPETYSSSSSSGGFTLHSHSSEGSFEGPSRPGTKEDNVQAKRAKVA.

The N-terminal stretch at 1–38 (MVSRPAMSPVSPVWPRKPNLWAFWVLRLVLLLSLKSWA) is a signal peptide. At 39 to 1063 (EDTLQHCTWL…GLPLSSKRSS (1025 aa)) the chain is on the extracellular side. Asn356 carries N-linked (GlcNAc...) asparagine glycosylation. Residues 1064–1084 (FIVMVSTSFFIALVVFYILFC) traverse the membrane as a helical segment. Topologically, residues 1085-1151 (LVWPHIVKAW…NVQAKRAKVA (67 aa)) are cytoplasmic. The segment covering 1113–1123 (SSSSGGFTLHS) has biased composition (low complexity). The interval 1113–1151 (SSSSGGFTLHSHSSEGSFEGPSRPGTKEDNVQAKRAKVA) is disordered.

The protein belongs to the CATSPERG family.

The protein localises to the membrane. The sequence is that of Cation channel sperm-associated protein subunit gamma 1 (Catsperg1) from Mus musculus (Mouse).